Reading from the N-terminus, the 76-residue chain is Protein MATERNALLY EXPRESSED GENE 4 (76 aa).

The first 27 residues, 1-27 (MEYRKRVDALVFFSLLLLGYFAAHAHG), serve as a signal peptide directing secretion. A disulfide bridge connects residues Cys-53 and Cys-75.

Belongs to the MEG family. In terms of tissue distribution, expressed exclusively in endosperm.

This Zea mays (Maize) protein is Protein MATERNALLY EXPRESSED GENE 4 (MEG4).